The chain runs to 397 residues: uncharacterized protein (397 aa).

Disordered stretches follow at residues 159 to 203 (LNSS…KSTI) and 221 to 397 (NSVK…KTKN). The segment covering 221-240 (NSVKSSPSKSFVSISSPVQS) has biased composition (low complexity). 2 stretches are compositionally biased toward polar residues: residues 285 to 309 (TSTL…SSST) and 320 to 330 (VNPNSTSSVTF). A DNA-binding region (zn(2)-C6 fungal-type) is located at residues 342 to 371 (CSRCKKSKKGCDRQRPCGRCRDAGLNSEDC). Positions 350–363 (KGCDRQRPCGRCRD) are enriched in basic and acidic residues. The segment covering 383–397 (RKPRGRGRGRPKTKN) has biased composition (basic residues).

Its subcellular location is the nucleus. This is an uncharacterized protein from Schizosaccharomyces pombe (strain 972 / ATCC 24843) (Fission yeast).